The following is a 784-amino-acid chain: Cas scaffolding protein family member 4 (784 aa).

Residues 11–73 form the SH3 domain; the sequence is PKALLARALY…PANRLQILEE (63 aa). Ser-197, Ser-246, Ser-302, Ser-373, and Ser-387 each carry phosphoserine. The disordered stretch occupies residues 343–376; it reads TPNIYDVPRAMPDVPQAGKELGKAGGPSENSVDH. The stretch at 466–536 forms a coiled coil; it reads RDSLEANIDA…LLETKERLES (71 aa). The interval 614 to 635 is disordered; sequence KEGESYQRKAPFQKQRASEQPP.

This sequence belongs to the CAS family. Interacts (via SH3 domain) with PTK2/FAK1 (via C-terminus). Phosphorylated on tyrosines by SRC.

The protein resides in the cytoplasm. It localises to the cytoskeleton. The protein localises to the cell junction. It is found in the focal adhesion. Docking protein that plays a role in tyrosine kinase-based signaling related to cell adhesion and cell spreading. Regulates PTK2/FAK1 activity, focal adhesion integrity, and cell spreading. The polypeptide is Cas scaffolding protein family member 4 (Sus scrofa (Pig)).